Consider the following 430-residue polypeptide: Serine--tRNA ligase (430 aa).

Residues 44 to 65 form a disordered region; that stretch reads TESLQAERNSRSKSIGAAKARG. 237 to 239 contacts L-serine; sequence TAE. 268–270 contacts ATP; the sequence is RSE. Residue E291 coordinates L-serine. 355–358 contacts ATP; that stretch reads EISS. S391 serves as a coordination point for L-serine.

It belongs to the class-II aminoacyl-tRNA synthetase family. Type-1 seryl-tRNA synthetase subfamily. As to quaternary structure, homodimer. The tRNA molecule binds across the dimer.

It localises to the cytoplasm. It catalyses the reaction tRNA(Ser) + L-serine + ATP = L-seryl-tRNA(Ser) + AMP + diphosphate + H(+). It carries out the reaction tRNA(Sec) + L-serine + ATP = L-seryl-tRNA(Sec) + AMP + diphosphate + H(+). It participates in aminoacyl-tRNA biosynthesis; selenocysteinyl-tRNA(Sec) biosynthesis; L-seryl-tRNA(Sec) from L-serine and tRNA(Sec): step 1/1. In terms of biological role, catalyzes the attachment of serine to tRNA(Ser). Is also able to aminoacylate tRNA(Sec) with serine, to form the misacylated tRNA L-seryl-tRNA(Sec), which will be further converted into selenocysteinyl-tRNA(Sec). The protein is Serine--tRNA ligase of Edwardsiella ictaluri (strain 93-146).